Consider the following 225-residue polypeptide: Movement and silencing protein TGBp1 (225 aa).

The (+)RNA virus helicase ATP-binding domain maps to 1-110 (MDFAELLESK…KDLLKPHYIC (110 aa)). The (+)RNA virus helicase C-terminal domain occupies 111–225 (PTTHRFGHST…LTPDAPSTSS (115 aa)).

The protein belongs to the Tymovirales TGBp1 protein family. As to quaternary structure, homodimer and homooligomer. Interacts with capsid protein. Interacts with host AGO1; this interaction targets the host protein for degradation, thereby suppressing the antiviral RNA silencing.

The protein resides in the host cytoplasm. Functionally, transports viral genome to neighboring plant cells directly through plasmosdesmata, without any budding. The movement protein allows efficient cell to cell propagation, by bypassing the host cell wall barrier. Increases plasmodesma size exclusion limit. Acts as a suppressor of RNA-mediated gene silencing, also known as post-transcriptional gene silencing (PTGS), a mechanism of plant viral defense that limits the accumulation of viral RNAs. The chain is Movement and silencing protein TGBp1 from Citrus (ICRSV).